Reading from the N-terminus, the 181-residue chain is Large ribosomal subunit protein uL5c (181 aa).

Belongs to the universal ribosomal protein uL5 family. Part of the 50S ribosomal subunit; contacts the 5S rRNA.

It is found in the plastid. Its subcellular location is the chloroplast. In terms of biological role, binds 5S rRNA, forms part of the central protuberance of the 50S subunit. The protein is Large ribosomal subunit protein uL5c (rpl5) of Rhodomonas salina (Cryptomonas salina).